Consider the following 354-residue polypeptide: D-alanine--D-alanine ligase (354 aa).

The region spanning 132-342 is the ATP-grasp domain; it reads KMVFERAGLP…FPSLVDRLLQ (211 aa). 168 to 223 is an ATP binding site; sequence EAQVGYPCFVKPANLGSSVGIAKVRNRSELEAALDNAASYDRRIIVEAGLTDIREV. Positions 295, 309, and 311 each coordinate Mg(2+).

This sequence belongs to the D-alanine--D-alanine ligase family. Requires Mg(2+) as cofactor. Mn(2+) is required as a cofactor.

The protein localises to the cytoplasm. The enzyme catalyses 2 D-alanine + ATP = D-alanyl-D-alanine + ADP + phosphate + H(+). The protein operates within cell wall biogenesis; peptidoglycan biosynthesis. Functionally, cell wall formation. The polypeptide is D-alanine--D-alanine ligase (Synechocystis sp. (strain ATCC 27184 / PCC 6803 / Kazusa)).